Here is a 372-residue protein sequence, read N- to C-terminus: Queuine tRNA-ribosyltransferase (372 aa).

Residue Asp-92 is the Proton acceptor of the active site. Residues 92-96 (DSGGY), Asp-146, Gln-188, and Gly-215 each bind substrate. An RNA binding region spans residues 246–252 (GIGSLRE). The active-site Nucleophile is the Asp-265. The RNA binding; important for wobble base 34 recognition stretch occupies residues 270–274 (TRLGR). Residues Cys-303, Cys-305, Cys-308, and His-334 each contribute to the Zn(2+) site.

It belongs to the queuine tRNA-ribosyltransferase family. Homodimer. Within each dimer, one monomer is responsible for RNA recognition and catalysis, while the other monomer binds to the replacement base PreQ1. It depends on Zn(2+) as a cofactor.

It carries out the reaction 7-aminomethyl-7-carbaguanine + guanosine(34) in tRNA = 7-aminomethyl-7-carbaguanosine(34) in tRNA + guanine. The protein operates within tRNA modification; tRNA-queuosine biosynthesis. Its function is as follows. Catalyzes the base-exchange of a guanine (G) residue with the queuine precursor 7-aminomethyl-7-deazaguanine (PreQ1) at position 34 (anticodon wobble position) in tRNAs with GU(N) anticodons (tRNA-Asp, -Asn, -His and -Tyr). Catalysis occurs through a double-displacement mechanism. The nucleophile active site attacks the C1' of nucleotide 34 to detach the guanine base from the RNA, forming a covalent enzyme-RNA intermediate. The proton acceptor active site deprotonates the incoming PreQ1, allowing a nucleophilic attack on the C1' of the ribose to form the product. After dissociation, two additional enzymatic reactions on the tRNA convert PreQ1 to queuine (Q), resulting in the hypermodified nucleoside queuosine (7-(((4,5-cis-dihydroxy-2-cyclopenten-1-yl)amino)methyl)-7-deazaguanosine). The polypeptide is Queuine tRNA-ribosyltransferase (Prochlorococcus marinus subsp. pastoris (strain CCMP1986 / NIES-2087 / MED4)).